A 335-amino-acid polypeptide reads, in one-letter code: Tyrosine-protein phosphatase 1 (335 aa).

Residues 15–328 form the Tyrosine-protein phosphatase domain; the sequence is LLGKFKFIQN…LFIYHAAKYL (314 aa). Serine 83 bears the Phosphoserine; by CLK1 mark. The active-site Phosphocysteine intermediate is cysteine 252.

This sequence belongs to the protein-tyrosine phosphatase family. Non-receptor class subfamily. Post-translationally, activated by phosphorylation at Ser-83.

The protein resides in the cytoplasm. It catalyses the reaction O-phospho-L-tyrosyl-[protein] + H2O = L-tyrosyl-[protein] + phosphate. Functionally, is not required for vegetative growth. The sequence is that of Tyrosine-protein phosphatase 1 (PTP1) from Saccharomyces cerevisiae (strain ATCC 204508 / S288c) (Baker's yeast).